The following is a 280-amino-acid chain: Clathrin adapter accessory protein LAA2 (280 aa).

The segment at 1-26 is disordered; sequence MSDRDQIEPVTNALDAESDSSDDFGN. The Ear-binding motif signature appears at 19–30; the sequence is DSSDDFGNFSDA.

As to quaternary structure, interacts with the clathrin-associated adapter complex AP-1. Interacts with LAA1.

It localises to the cytoplasmic vesicle. It is found in the clathrin-coated vesicle. Its function is as follows. Involved in localization of clathrin-associated adapter complex (AP-1) and subsequent AP-1-mediated clathrin-coated vesicle cargo loading. Directly mediates the interaction between LAA1 and AP-1 which is required for AP-1 localization. In complex with LAA1, cooperates with the small GTPase ARF1 and the phosphatidyl-inositol-4-phosphate (PI4P) synthesis to confer temporal specificity to AP-1 recruitment. The protein is Clathrin adapter accessory protein LAA2 of Saccharomyces cerevisiae (strain ATCC 204508 / S288c) (Baker's yeast).